A 564-amino-acid chain; its full sequence is Urocanate hydratase (564 aa).

Residues 58-59 (GG), Gln136, 182-184 (GMG), Glu202, Arg207, 248-249 (NA), 269-273 (QTSAH), 279-280 (YL), and Tyr328 each bind NAD(+). Cys416 is an active-site residue. Gly498 lines the NAD(+) pocket.

Belongs to the urocanase family. NAD(+) serves as cofactor.

The protein localises to the cytoplasm. It catalyses the reaction 4-imidazolone-5-propanoate = trans-urocanate + H2O. Its pathway is amino-acid degradation; L-histidine degradation into L-glutamate; N-formimidoyl-L-glutamate from L-histidine: step 2/3. In terms of biological role, catalyzes the conversion of urocanate to 4-imidazolone-5-propionate. The protein is Urocanate hydratase of Aliivibrio salmonicida (strain LFI1238) (Vibrio salmonicida (strain LFI1238)).